The primary structure comprises 152 residues: Superoxide dismutase [Cu-Zn] 2 (152 aa).

Positions 45, 47, and 62 each coordinate Cu cation. The interval 53–81 (TNGSMSTGPHFNPDGKQHGAPEDANRHAG) is disordered. Zn(2+) contacts are provided by His-62, His-70, His-79, and Asp-82. The segment covering 65–81 (PDGKQHGAPEDANRHAG) has biased composition (basic and acidic residues). His-119 lines the Cu cation pocket.

This sequence belongs to the Cu-Zn superoxide dismutase family. Homodimer. Requires Cu cation as cofactor. Zn(2+) serves as cofactor.

The protein resides in the cytoplasm. It catalyses the reaction 2 superoxide + 2 H(+) = H2O2 + O2. Its function is as follows. Destroys radicals which are normally produced within the cells and which are toxic to biological systems. This Brassica juncea (Indian mustard) protein is Superoxide dismutase [Cu-Zn] 2 (SODCC2).